Here is a 373-residue protein sequence, read N- to C-terminus: Putative protein YfkA (373 aa).

The Radical SAM core domain maps to 26 to 256; sequence YGDMQLTNVE…DIRDENTWML (231 aa). [4Fe-4S] cluster is bound by residues C42, C46, and C49.

The protein belongs to the radical SAM superfamily. [4Fe-4S] cluster is required as a cofactor.

This Bacillus subtilis (strain 168) protein is Putative protein YfkA (yfkA).